A 238-amino-acid polypeptide reads, in one-letter code: ATP synthase subunit a (238 aa).

5 consecutive transmembrane segments (helical) span residues 18 to 38, 76 to 96, 114 to 134, 166 to 186, and 193 to 213; these read LTLL…VFWA, YSLL…LGLF, NLAF…IEGV, SLAI…GLIV, and VYWW…SVFI.

It belongs to the ATPase A chain family. As to quaternary structure, F-type ATPases have 2 components, CF(1) - the catalytic core - and CF(0) - the membrane proton channel. CF(1) has five subunits: alpha(3), beta(3), gamma(1), delta(1), epsilon(1). CF(0) has three main subunits: a(1), b(2) and c(9-12). The alpha and beta chains form an alternating ring which encloses part of the gamma chain. CF(1) is attached to CF(0) by a central stalk formed by the gamma and epsilon chains, while a peripheral stalk is formed by the delta and b chains.

Its subcellular location is the cell membrane. Functionally, key component of the proton channel; it plays a direct role in the translocation of protons across the membrane. In Streptococcus pyogenes serotype M49 (strain NZ131), this protein is ATP synthase subunit a.